Consider the following 242-residue polypeptide: Neuromodulin (242 aa).

Residues 1 to 242 (MLCCMRRTKQ…EEREADQEHA (242 aa)) are disordered. S-palmitoyl cysteine attachment occurs at residues C3 and C4. The span at 9-32 (KQVEKNDEDQKIEQDGIKPEDKAH) shows a compositional bias: basic and acidic residues. The IQ domain occupies 31–60 (AHKAATKIQASFRGHITRKKLKGEKKGDAP). S41 carries the post-translational modification Phosphoserine; by PHK and PKC. Residues 66–84 (ANEKDEAAVAEGTEKKEGE) show a composition bias toward basic and acidic residues. Residues 85-97 (GSTPAEAAPGAGP) are compositionally biased toward low complexity. At S86 the chain carries Phosphoserine. Basic and acidic residues predominate over residues 98 to 118 (KPEEKTGKAGETPSEEKKGEG). Over residues 119–134 (APDAATEQAAPQAPAP) the composition is skewed to low complexity. A compositionally biased stretch (polar residues) spans 143–158 (ETESATKASTDNSPSS). A phosphoserine mark is found at S155, S157, and S158. Residues 159–171 (KAEDAPAKEEPKQ) show a composition bias toward basic and acidic residues. Residues 172–204 (ADVPAAVTAAAATAPAAEDAAAMATAQPPTETA) are compositionally biased toward low complexity. Phosphoserine; by CK2 is present on residues S206 and S207. Positions 209–242 (AEEKIEAVDETKPKDSARQDEGKGEEREADQEHA) are enriched in basic and acidic residues.

Belongs to the neuromodulin family. In terms of assembly, identified in a complex containing FGFR4, NCAM1, CDH2, PLCG1, FRS2, SRC, SHC1, GAP43 and CTTN. Interacts (via IQ domain) with calmodulin. Binds calmodulin with a greater affinity in the absence of Ca(2+) than in its presence. Phosphorylated. Phosphorylation of this protein by a protein kinase C is specifically correlated with certain forms of synaptic plasticity. In terms of processing, palmitoylated by ZDHHC3. Palmitoylation is regulated by ARF6 and is essential for plasma membrane association and axonal and dendritic filopodia induction. Deacylated by LYPLA2.

It localises to the cell membrane. The protein resides in the cell projection. Its subcellular location is the growth cone membrane. The protein localises to the synapse. It is found in the filopodium membrane. It localises to the perikaryon. The protein resides in the dendrite. Its subcellular location is the axon. The protein localises to the cytoplasm. Its function is as follows. This protein is associated with nerve growth. It is a major component of the motile 'growth cones' that form the tips of elongating axons. Plays a role in axonal and dendritic filopodia induction. This is Neuromodulin (GAP43) from Bos taurus (Bovine).